The sequence spans 328 residues: D-cysteine desulfhydrase (328 aa).

The residue at position 51 (Lys51) is an N6-(pyridoxal phosphate)lysine.

Belongs to the ACC deaminase/D-cysteine desulfhydrase family. As to quaternary structure, homodimer. Pyridoxal 5'-phosphate serves as cofactor.

The enzyme catalyses D-cysteine + H2O = hydrogen sulfide + pyruvate + NH4(+) + H(+). Catalyzes the alpha,beta-elimination reaction of D-cysteine and of several D-cysteine derivatives. It could be a defense mechanism against D-cysteine. The sequence is that of D-cysteine desulfhydrase from Salmonella paratyphi C (strain RKS4594).